A 279-amino-acid chain; its full sequence is Lactose operon transcription activator (279 aa).

The region spanning 174–272 (QHAVDFINTN…EISASEYRHH (99 aa)) is the HTH araC/xylS-type domain. 2 DNA-binding regions (H-T-H motif) span residues 191 to 212 (EDVA…KKNL) and 239 to 262 (ISDI…TKHF).

Functionally, transcriptional regulator of the lacPH genes for lactose utilization. In Staphylococcus xylosus, this protein is Lactose operon transcription activator (lacR).